Consider the following 458-residue polypeptide: Argininosuccinate lyase (458 aa).

It belongs to the lyase 1 family. Argininosuccinate lyase subfamily.

The protein resides in the cytoplasm. The catalysed reaction is 2-(N(omega)-L-arginino)succinate = fumarate + L-arginine. The protein operates within amino-acid biosynthesis; L-arginine biosynthesis; L-arginine from L-ornithine and carbamoyl phosphate: step 3/3. This is Argininosuccinate lyase from Actinobacillus pleuropneumoniae serotype 7 (strain AP76).